The chain runs to 465 residues: Branched-chain amino acid permease BcaP (465 aa).

Transmembrane regions (helical) follow at residues 28-48, 56-76, 88-110, 149-169, 181-201, 219-239, 259-279, 309-329, 359-379, 380-400, 416-436, and 438-458; these read FLAL…PGQV, GVVF…LAYA, AYSW…ALLA, DGGI…IIVF, ILVV…ITVI, FGGF…YIGF, GIIG…LVLV, VVTA…VLAG, VWTL…AFLA, QLIS…IYSL, PFYP…FWGL, and VQAK…YFAY.

Belongs to the amino acid-polyamine-organocation (APC) superfamily.

Its subcellular location is the cell membrane. Functionally, branched-chain amino acid transport system that specifically transports branched-chain amino acids (BCAAs) (isoleucine, leucine and valine) and, to a lesser extent, methionine. Important for CodY-mediated regulation, and required for optimal growth in media containing free amino acids as the only amino acid source. The protein is Branched-chain amino acid permease BcaP of Lactococcus lactis subsp. cremoris (strain MG1363).